Reading from the N-terminus, the 387-residue chain is Structural protein ORF387 (387 aa).

Positions 315 to 387 (KTFQEMVKVA…EEKNNTVKLS (73 aa)) form a coiled coil. Positions 365–387 (LTEEQQQQNETEEEEKNNTVKLS) are disordered.

The protein resides in the virion. This chain is Structural protein ORF387, found in Acidianus convivator (ATV).